The chain runs to 505 residues: MITLTGHTLTIEEMKRLLLEGEGVTACPNSMQKVAECREVVEKIVEDGKVVYGITTGFGKFSDVLIQKDDVKALQHNLIQSHACGIGDPFPEEVSRGMLILRANTMLKGVSGVRPLVVNMLLEFVNRKIHPVVPQQGSLGASGDLAPLSHLALVLLGEGEVFYKGKRVHAMVALTEEGLEPIELEAKEGLALINGTQAMTAQGVLSYIEAEATAYQAEFIASMTIEGLQGIIDAFDENVHKARGYKEQVEVASRIRDILHDSKLTTKQGKLRVQDAYSLRCIPQVHGASWQVLNYVKEKLEIEMNAATDNPLIFDGGEKVISGGNFHGQPIAFAMDFLKVGMAELANISERRIERLVNPQLNDLPPFLSPEPGLQSGAMIMQYAAASLVSENKTLAHPASVDSIPSSANQEDHVSMGTIASRHAHQIIQNVRRVLSIEMICAMQAAEYRGIENMSTVTKSFYHQGRQQVPSITNDRIFSTDIENIAYWLKTNYSIKERLDVNAAL.

The 5-imidazolinone (Ala-Gly) cross-link spans 141 to 143; the sequence is ASG. S142 bears the 2,3-didehydroalanine (Ser) mark.

It belongs to the PAL/histidase family. In terms of processing, contains an active site 4-methylidene-imidazol-5-one (MIO), which is formed autocatalytically by cyclization and dehydration of residues Ala-Ser-Gly.

It is found in the cytoplasm. The catalysed reaction is L-histidine = trans-urocanate + NH4(+). Its pathway is amino-acid degradation; L-histidine degradation into L-glutamate; N-formimidoyl-L-glutamate from L-histidine: step 1/3. The chain is Histidine ammonia-lyase from Bacillus thuringiensis subsp. konkukian (strain 97-27).